A 432-amino-acid polypeptide reads, in one-letter code: D-amino acid dehydrogenase (432 aa).

3–17 (VLVLGSGVIGTASAY) contributes to the FAD binding site.

It belongs to the DadA oxidoreductase family. It depends on FAD as a cofactor.

It carries out the reaction a D-alpha-amino acid + A + H2O = a 2-oxocarboxylate + AH2 + NH4(+). It participates in amino-acid degradation; D-alanine degradation; NH(3) and pyruvate from D-alanine: step 1/1. Its function is as follows. Oxidative deamination of D-amino acids. This is D-amino acid dehydrogenase from Ectopseudomonas mendocina (strain ymp) (Pseudomonas mendocina).